Reading from the N-terminus, the 307-residue chain is tRNA pseudouridine synthase B (307 aa).

Aspartate 38 functions as the Nucleophile in the catalytic mechanism.

The protein belongs to the pseudouridine synthase TruB family. Type 1 subfamily.

It carries out the reaction uridine(55) in tRNA = pseudouridine(55) in tRNA. Responsible for synthesis of pseudouridine from uracil-55 in the psi GC loop of transfer RNAs. This chain is tRNA pseudouridine synthase B, found in Bacillus anthracis.